The chain runs to 366 residues: Ribosomal RNA large subunit methyltransferase M (366 aa).

Residues Ser188, Cys221–Gly224, Asp240, Asp260, and Asp277 each bind S-adenosyl-L-methionine. Lys306 functions as the Proton acceptor in the catalytic mechanism.

The protein belongs to the class I-like SAM-binding methyltransferase superfamily. RNA methyltransferase RlmE family. RlmM subfamily. As to quaternary structure, monomer.

It localises to the cytoplasm. It catalyses the reaction cytidine(2498) in 23S rRNA + S-adenosyl-L-methionine = 2'-O-methylcytidine(2498) in 23S rRNA + S-adenosyl-L-homocysteine + H(+). In terms of biological role, catalyzes the 2'-O-methylation at nucleotide C2498 in 23S rRNA. This is Ribosomal RNA large subunit methyltransferase M from Shigella flexneri serotype 5b (strain 8401).